An 89-amino-acid chain; its full sequence is Putative acyl-CoA-binding protein (89 aa).

Residues 3–88 (VEEQFKTSAE…VKELVEKNGL (86 aa)) enclose the ACB domain. An acyl-CoA contacts are provided by residues Lys15, 30-34 (YSLYK), Lys52, Lys56, and Tyr75.

Belongs to the ACBP family.

Functionally, binds medium- and long-chain acyl-CoA esters with very high affinity and may function as an intracellular carrier of acyl-CoA esters. The chain is Putative acyl-CoA-binding protein from Hypsibius exemplaris (Freshwater tardigrade).